Reading from the N-terminus, the 361-residue chain is Outer mitochondrial transmembrane helix translocase (361 aa).

Over 1–15 the chain is Mitochondrial intermembrane; that stretch reads MVHAEAFSRPLSRNE. A helical membrane pass occupies residues 16-32; that stretch reads VVGLIFRLTIFGAVTYF. The Cytoplasmic portion of the chain corresponds to 33–361; the sequence is TIKWMVDAID…QSVLTHVCLD (329 aa). An ATP-binding site is contributed by 133–140; that stretch reads GPPGCGKT. S322 carries the post-translational modification Phosphoserine.

The protein belongs to the AAA ATPase family. MSP1 subfamily. In terms of assembly, interacts with GRIA2 and GRIP1 in an ATP-dependent manner. ATAD1-catalyzed ATP hydrolysis disrupts not only its binding to GRIA2 and GRIP1, but also interaction between GRIP1 and GRIA2, leading to AMPAR complex disassembly.

It localises to the mitochondrion outer membrane. The protein localises to the peroxisome membrane. Its subcellular location is the postsynaptic cell membrane. It carries out the reaction [protein]-with a C-terminal TM segment(out) + ATP + H2O = [protein]-with a C-terminal TM segment(in) + ADP + phosphate + H(+). In terms of biological role, outer mitochondrial translocase required to remove mislocalized tail-anchored transmembrane proteins on mitochondria. Specifically recognizes and binds tail-anchored transmembrane proteins: acts as a dislocase that mediates the ATP-dependent extraction of mistargeted tail-anchored transmembrane proteins from the mitochondrion outer membrane. Also plays a critical role in regulating the surface expression of AMPA receptors (AMPAR), thereby regulating synaptic plasticity and learning and memory. Required for NMDA-stimulated AMPAR internalization and inhibition of GRIA1 and GRIA2 recycling back to the plasma membrane; these activities are ATPase-dependent. This is Outer mitochondrial transmembrane helix translocase from Rattus norvegicus (Rat).